The chain runs to 162 residues: Phycoerythrocyanin alpha chain (162 aa).

Cysteine 84 is a binding site for (15Z)-phycoviolobilin.

The protein belongs to the phycobiliprotein family. As to quaternary structure, heterodimer of an alpha and a beta chain. Contains one covalently linked bilin chromophore.

The protein resides in the cellular thylakoid membrane. Light-harvesting photosynthetic bile pigment-protein from the phycobiliprotein complex. The polypeptide is Phycoerythrocyanin alpha chain (pecA) (Nostoc sp. (strain PCC 7120 / SAG 25.82 / UTEX 2576)).